A 567-amino-acid polypeptide reads, in one-letter code: TGF-beta receptor type-2 (567 aa).

An N-terminal signal peptide occupies residues 1–23 (MGRGLLRGLWPLHIVLWTRIAST). Residues 24–166 (IPPHVPKSVN…SPDLLLVIIQ (143 aa)) are Extracellular-facing. 6 disulfide bridges follow: C51-C84, C54-C71, C61-C67, C77-C101, C121-C136, and C138-C143. N-linked (GlcNAc...) asparagine glycosylation is found at N70 and N94. Residues 167–187 (VTGVSLLPPLGIAIAVIAIFY) form a helical membrane-spanning segment. Over 188 to 567 (CYRVHRQQKL…PEDGSLNTTK (380 aa)) the chain is Cytoplasmic. The region spanning 244 to 546 (IELDTLVGKG…RFSELEHPDR (303 aa)) is the Protein kinase domain. Residues 250 to 258 (VGKGRFAEV) and K277 each bind ATP. Residue D379 is the Proton acceptor of the active site. Phosphoserine is present on residues S409, S548, and S553. Residues 546–567 (RLSGRSCSQEKIPEDGSLNTTK) are disordered.

Belongs to the protein kinase superfamily. TKL Ser/Thr protein kinase family. TGFB receptor subfamily. Homodimer. Heterohexamer; TGFB1, TGFB2 and TGFB3 homodimeric ligands assemble a functional receptor composed of two TGFBR1 and TGFBR2 heterodimers to form a ligand-receptor heterohexamer. The respective affinity of TGFRB1 and TGFRB2 for the ligands may modulate the kinetics of assembly of the receptor and may explain the different biological activities of TGFB1, TGFB2 and TGFB3. Component of a complex composed of TSC22D1 (via N-terminus), TGFBR1 and TGFBR2; the interaction between TSC22D1 and TGFBR1 is inhibited by SMAD7 and promoted by TGFB1. Interacts with DAXX. Interacts with DYNLT4. Interacts with ZFYVE9; ZFYVE9 recruits SMAD2 and SMAD3 to the TGF-beta receptor. Interacts with and is activated by SCUBE3; this interaction does not affect TGFB1-binding to TGFBR2. Interacts with VPS39; this interaction is independent of the receptor kinase activity and of the presence of TGF-beta. Interacts with CLU. Requires Mg(2+) as cofactor. Mn(2+) serves as cofactor. Post-translationally, phosphorylated on a Ser/Thr residue in the cytoplasmic domain.

Its subcellular location is the cell membrane. The protein localises to the membrane raft. The enzyme catalyses L-threonyl-[receptor-protein] + ATP = O-phospho-L-threonyl-[receptor-protein] + ADP + H(+). It catalyses the reaction L-seryl-[receptor-protein] + ATP = O-phospho-L-seryl-[receptor-protein] + ADP + H(+). Its function is as follows. Transmembrane serine/threonine kinase forming with the TGF-beta type I serine/threonine kinase receptor, TGFBR1, the non-promiscuous receptor for the TGF-beta cytokines TGFB1, TGFB2 and TGFB3. Transduces the TGFB1, TGFB2 and TGFB3 signal from the cell surface to the cytoplasm and is thus regulating a plethora of physiological and pathological processes including cell cycle arrest in epithelial and hematopoietic cells, control of mesenchymal cell proliferation and differentiation, wound healing, extracellular matrix production, immunosuppression and carcinogenesis. The formation of the receptor complex composed of 2 TGFBR1 and 2 TGFBR2 molecules symmetrically bound to the cytokine dimer results in the phosphorylation and the activation of TGFRB1 by the constitutively active TGFBR2. Activated TGFBR1 phosphorylates SMAD2 which dissociates from the receptor and interacts with SMAD4. The SMAD2-SMAD4 complex is subsequently translocated to the nucleus where it modulates the transcription of the TGF-beta-regulated genes. This constitutes the canonical SMAD-dependent TGF-beta signaling cascade. Also involved in non-canonical, SMAD-independent TGF-beta signaling pathways. In Rattus norvegicus (Rat), this protein is TGF-beta receptor type-2 (Tgfbr2).